The primary structure comprises 436 residues: Chaperone protein dnaJ 16 (436 aa).

Residues 20–85 enclose the J domain; the sequence is DPYEVLGVLR…EKRRQFDSAG (66 aa). Positions 291–348 form a coiled coil; that stretch reads TQEKEDLRSVEAQILTKRAELAKFETEYREVLVQFTDMTSRYAQEMQSIDELLKQRNE. The tract at residues 360 to 416 is disordered; sequence KRSSSKNRMRKSSFKKAAAKAPAPTEQEEEEEEEEEEEEESSRQKNKKPSTCDKSET. Basic residues predominate over residues 362-377; the sequence is SSSKNRMRKSSFKKAA. Over residues 385–399 the composition is skewed to acidic residues; the sequence is EQEEEEEEEEEEEEE.

It belongs to the DnaJ family. B/II subfamily. In terms of tissue distribution, expressed constitutively in seedlings, roots, leaves, stems, flowers and siliques.

The protein localises to the membrane. In terms of biological role, plays a continuous role in plant development probably in the structural organization of compartments. Seems to not be involved in gravitropism signaling pathway. The chain is Chaperone protein dnaJ 16 (ATJ16) from Arabidopsis thaliana (Mouse-ear cress).